The sequence spans 500 residues: NAD(P)H-quinone oxidoreductase chain 4, chloroplastic (500 aa).

15 helical membrane-spanning segments follow: residues 4–24, 31–51, 87–107, 111–131, 134–154, 167–187, 207–227, 242–262, 274–294, 305–325, 330–350, 358–378, 386–406, 416–436, and 462–482; these read LPWL…IPLF, IIRW…TYTF, IGPI…AWPV, PRLF…LFAS, ILLF…LISM, FILY…SMGL, VVLE…KLPI, HYST…YGLI, SLFS…AALT, IAYS…SMAD, GAIL…FLAG, TLFL…STMF, LALP…GIIT, IVIA…LLSM, and IFIS…PDLV.

The protein belongs to the complex I subunit 4 family.

It localises to the plastid. Its subcellular location is the chloroplast thylakoid membrane. It carries out the reaction a plastoquinone + NADH + (n+1) H(+)(in) = a plastoquinol + NAD(+) + n H(+)(out). The enzyme catalyses a plastoquinone + NADPH + (n+1) H(+)(in) = a plastoquinol + NADP(+) + n H(+)(out). This is NAD(P)H-quinone oxidoreductase chain 4, chloroplastic from Cycas taitungensis (Prince sago).